We begin with the raw amino-acid sequence, 190 residues long: Shikimate kinase (190 aa).

15 to 20 (GSGKST) lines the ATP pocket. A Mg(2+)-binding site is contributed by Ser19. Asp37, Arg61, and Gly83 together coordinate substrate. Arg121 contributes to the ATP binding site. Arg148 is a substrate binding site.

This sequence belongs to the shikimate kinase family. Monomer. Requires Mg(2+) as cofactor.

It localises to the cytoplasm. It catalyses the reaction shikimate + ATP = 3-phosphoshikimate + ADP + H(+). The protein operates within metabolic intermediate biosynthesis; chorismate biosynthesis; chorismate from D-erythrose 4-phosphate and phosphoenolpyruvate: step 5/7. Catalyzes the specific phosphorylation of the 3-hydroxyl group of shikimic acid using ATP as a cosubstrate. The sequence is that of Shikimate kinase from Chlorobium chlorochromatii (strain CaD3).